Here is a 989-residue protein sequence, read N- to C-terminus: Bifunctional glutamine synthetase adenylyltransferase/adenylyl-removing enzyme (989 aa).

Residues 1-474 form an adenylyl removase region; the sequence is MNSSAIDADI…HYGKLFEGDP (474 aa). Positions 480–989 are adenylyl transferase; that stretch reads LPIDYAGGPD…FNRLIGGDSA (510 aa).

The protein belongs to the GlnE family. Requires Mg(2+) as cofactor.

It carries out the reaction [glutamine synthetase]-O(4)-(5'-adenylyl)-L-tyrosine + phosphate = [glutamine synthetase]-L-tyrosine + ADP. The catalysed reaction is [glutamine synthetase]-L-tyrosine + ATP = [glutamine synthetase]-O(4)-(5'-adenylyl)-L-tyrosine + diphosphate. In terms of biological role, involved in the regulation of glutamine synthetase GlnA, a key enzyme in the process to assimilate ammonia. When cellular nitrogen levels are high, the C-terminal adenylyl transferase (AT) inactivates GlnA by covalent transfer of an adenylyl group from ATP to specific tyrosine residue of GlnA, thus reducing its activity. Conversely, when nitrogen levels are low, the N-terminal adenylyl removase (AR) activates GlnA by removing the adenylyl group by phosphorolysis, increasing its activity. The regulatory region of GlnE binds the signal transduction protein PII (GlnB) which indicates the nitrogen status of the cell. The chain is Bifunctional glutamine synthetase adenylyltransferase/adenylyl-removing enzyme from Rhodopseudomonas palustris (strain BisB5).